The primary structure comprises 67 residues: Conotoxin Cal6.35 (67 aa).

The signal sequence occupies residues 1–22; it reads MKLTCVLIVAVLILTACQVIAA. 3 disulfides stabilise this stretch: Cys-43-Cys-53, Cys-46-Cys-59, and Cys-52-Cys-66.

This sequence belongs to the conotoxin O1 superfamily. As to expression, expressed by the venom duct.

The protein localises to the secreted. In terms of biological role, probable neurotoxin. The protein is Conotoxin Cal6.35 of Californiconus californicus (California cone).